The primary structure comprises 461 residues: PE-PGRS family protein PE_PGRS45 (461 aa).

The region spanning 4–92 (VNVAPQLVST…GSTYAVAEAA (89 aa)) is the PE domain. Disordered stretches follow at residues 232–251 (GGAG…GGNG) and 426–461 (AGSL…GADG). The segment covering 434-446 (PGFGGPGGSGGAS) has biased composition (gly residues).

It belongs to the mycobacterial PE family. PGRS subfamily. As to quaternary structure, interacts with human TIMM23, which is part of a complex that mediates the translocation of transit peptide-containing proteins across the mitochondrial inner membrane.

The protein localises to the cell membrane. It is found in the secreted. The protein resides in the cell wall. It localises to the host mitochondrion. The catalysed reaction is hexadecanal + NADP(+) + CoA = hexadecanoyl-CoA + NADPH + H(+). Its activity is regulated as follows. Oxidoreductase activity is inhibited by the first line anti-tubercular drug isoniazid (INH). In terms of biological role, may be an effector protein that contributes to pathogenesis by targeting host mitochondria, where it modulates host cellular processes. In THP1 macrophages, increases the ADP-to-ATP ratio and increases the cellular ROS levels. Also induces mitochondrial perturbations through membrane depolarization, release of mitochondrial superoxide, up-regulation of expression of host proapoptotic proteins (BAX and BIM) and release of cytochrome C into the cytosol. May bind calcium to increase intracellular calcium influx, which may further lead to mitochondrial perturbations. Mitochondrial perturbations and alteration of Ca(2+) influx are independent but simultaneous events. Functionally, in vitro, shows NADPH-dependent fatty acyl coenzyme A oxidoreductase activity. Can oxidize palmitoyl-CoA, but not glutathione and thiourea. This Mycobacterium tuberculosis (strain ATCC 25618 / H37Rv) protein is PE-PGRS family protein PE_PGRS45.